The following is a 172-amino-acid chain: NAD(P)H-quinone oxidoreductase subunit I, chloroplastic (172 aa).

4Fe-4S ferredoxin-type domains follow at residues 55 to 84 (GRIHFEFDKCIACEVCVRVCPIDLPVVDWK) and 95 to 124 (LNYSIDFGICIFCGNCVEYCPTNCLSMTEE). Cysteine 64, cysteine 67, cysteine 70, cysteine 74, cysteine 104, cysteine 107, cysteine 110, and cysteine 114 together coordinate [4Fe-4S] cluster.

The protein belongs to the complex I 23 kDa subunit family. In terms of assembly, NDH is composed of at least 16 different subunits, 5 of which are encoded in the nucleus. [4Fe-4S] cluster serves as cofactor.

It localises to the plastid. The protein localises to the chloroplast thylakoid membrane. It carries out the reaction a plastoquinone + NADH + (n+1) H(+)(in) = a plastoquinol + NAD(+) + n H(+)(out). The catalysed reaction is a plastoquinone + NADPH + (n+1) H(+)(in) = a plastoquinol + NADP(+) + n H(+)(out). Its function is as follows. NDH shuttles electrons from NAD(P)H:plastoquinone, via FMN and iron-sulfur (Fe-S) centers, to quinones in the photosynthetic chain and possibly in a chloroplast respiratory chain. The immediate electron acceptor for the enzyme in this species is believed to be plastoquinone. Couples the redox reaction to proton translocation, and thus conserves the redox energy in a proton gradient. In Olimarabidopsis pumila (Dwarf rocket), this protein is NAD(P)H-quinone oxidoreductase subunit I, chloroplastic.